The chain runs to 28 residues: YCQKFLWTCDSERPCCEGLVCRLWCKIN.

Disulfide bonds link Cys2/Cys16, Cys9/Cys21, and Cys15/Cys25. At Asn28 the chain carries Asparagine amide.

The protein belongs to the neurotoxin 30 (phrixotoxin) family. As to expression, expressed by the venom gland.

The protein resides in the secreted. Its function is as follows. Potent and selective inhibitor of Nav1.7/SCN9A sodium channels. Inhibits Nav1.7/SCN9A peak current (IC(50)=13 nM). In vivo, does not induce visible signs of toxicity when intravenously injected into mice. The protein is Mu-theraphotoxin-Hsp1a of Homoeomma sp. (Peruvian tarantula).